Here is a 328-residue protein sequence, read N- to C-terminus: Probable cytosolic iron-sulfur protein assembly protein 1 (328 aa).

7 WD repeats span residues 12-49, 54-93, 102-141, 148-187, 192-233, 246-284, and 291-328; these read LHGD…LVEE, AHKK…YSGE, GHEN…EEFE, EHSQ…WECA, GHGG…ADVF, VHTR…RWEV, and AHTV…LREE.

Belongs to the WD repeat CIA1 family. As to quaternary structure, interacts with NAR1.

It is found in the cytoplasm. It localises to the nucleus. In terms of biological role, essential component of the cytosolic iron-sulfur (Fe/S) protein assembly machinery. Required for the maturation of extramitochondrial Fe/S proteins. The polypeptide is Probable cytosolic iron-sulfur protein assembly protein 1 (Eremothecium gossypii (strain ATCC 10895 / CBS 109.51 / FGSC 9923 / NRRL Y-1056) (Yeast)).